The sequence spans 687 residues: Polyphosphate kinase (687 aa).

Residue asparagine 45 coordinates ATP. Mg(2+)-binding residues include arginine 375 and arginine 405. The active-site Phosphohistidine intermediate is the histidine 435. 3 residues coordinate ATP: tyrosine 472, arginine 568, and histidine 596.

This sequence belongs to the polyphosphate kinase 1 (PPK1) family. Mg(2+) serves as cofactor. An intermediate of this reaction is the autophosphorylated ppk in which a phosphate is covalently linked to a histidine residue through a N-P bond.

It carries out the reaction [phosphate](n) + ATP = [phosphate](n+1) + ADP. Its function is as follows. Catalyzes the reversible transfer of the terminal phosphate of ATP to form a long-chain polyphosphate (polyP). This Burkholderia vietnamiensis (strain G4 / LMG 22486) (Burkholderia cepacia (strain R1808)) protein is Polyphosphate kinase.